The following is a 303-amino-acid chain: Methionyl-tRNA formyltransferase (303 aa).

Residue 108 to 111 participates in (6S)-5,6,7,8-tetrahydrofolate binding; the sequence is SDLP.

Belongs to the Fmt family.

It carries out the reaction L-methionyl-tRNA(fMet) + (6R)-10-formyltetrahydrofolate = N-formyl-L-methionyl-tRNA(fMet) + (6S)-5,6,7,8-tetrahydrofolate + H(+). Functionally, attaches a formyl group to the free amino group of methionyl-tRNA(fMet). The formyl group appears to play a dual role in the initiator identity of N-formylmethionyl-tRNA by promoting its recognition by IF2 and preventing the misappropriation of this tRNA by the elongation apparatus. This is Methionyl-tRNA formyltransferase from Rickettsia prowazekii (strain Madrid E).